The primary structure comprises 1034 residues: Isoleucine--tRNA ligase (1034 aa).

Positions 46–56 (PYCSGAIHLGT) match the 'HIGH' region motif. A 'KMSKS' region motif is present at residues 598 to 602 (KMSKS). K601 contributes to the ATP binding site.

It belongs to the class-I aminoacyl-tRNA synthetase family. IleS type 2 subfamily. In terms of assembly, monomer. The cofactor is Zn(2+).

It is found in the cytoplasm. It catalyses the reaction tRNA(Ile) + L-isoleucine + ATP = L-isoleucyl-tRNA(Ile) + AMP + diphosphate. Functionally, catalyzes the attachment of isoleucine to tRNA(Ile). As IleRS can inadvertently accommodate and process structurally similar amino acids such as valine, to avoid such errors it has two additional distinct tRNA(Ile)-dependent editing activities. One activity is designated as 'pretransfer' editing and involves the hydrolysis of activated Val-AMP. The other activity is designated 'posttransfer' editing and involves deacylation of mischarged Val-tRNA(Ile). In Methanococcus maripaludis (strain DSM 14266 / JCM 13030 / NBRC 101832 / S2 / LL), this protein is Isoleucine--tRNA ligase.